The chain runs to 156 residues: 6,7-dimethyl-8-ribityllumazine synthase (156 aa).

5-amino-6-(D-ribitylamino)uracil is bound by residues F22, 57 to 59 (AVE), and 81 to 83 (TVI). Position 86-87 (86-87 (GT)) interacts with (2S)-2-hydroxy-3-oxobutyl phosphate. H89 acts as the Proton donor in catalysis. F114 contacts 5-amino-6-(D-ribitylamino)uracil. A (2S)-2-hydroxy-3-oxobutyl phosphate-binding site is contributed by R128.

Belongs to the DMRL synthase family. As to quaternary structure, forms an icosahedral capsid composed of 60 subunits, arranged as a dodecamer of pentamers.

It catalyses the reaction (2S)-2-hydroxy-3-oxobutyl phosphate + 5-amino-6-(D-ribitylamino)uracil = 6,7-dimethyl-8-(1-D-ribityl)lumazine + phosphate + 2 H2O + H(+). It participates in cofactor biosynthesis; riboflavin biosynthesis; riboflavin from 2-hydroxy-3-oxobutyl phosphate and 5-amino-6-(D-ribitylamino)uracil: step 1/2. Functionally, catalyzes the formation of 6,7-dimethyl-8-ribityllumazine by condensation of 5-amino-6-(D-ribitylamino)uracil with 3,4-dihydroxy-2-butanone 4-phosphate. This is the penultimate step in the biosynthesis of riboflavin. In Vibrio campbellii (strain ATCC BAA-1116), this protein is 6,7-dimethyl-8-ribityllumazine synthase.